A 62-amino-acid polypeptide reads, in one-letter code: uncharacterized protein (62 aa).

The protein localises to the plastid. The protein resides in the chloroplast. This is an uncharacterized protein from Guillardia theta (Cryptophyte).